The chain runs to 82 residues: uncharacterized protein (82 aa).

Residues 22-82 (LRRSRSSRNG…WPPPCAFTPG (61 aa)) are disordered. The span at 47–58 (HRGEPGHPRMEE) shows a compositional bias: basic and acidic residues. The span at 73-82 (WPPPCAFTPG) shows a compositional bias: pro residues.

This is an uncharacterized protein from Homo sapiens (Human).